A 192-amino-acid chain; its full sequence is UPF0301 protein Bamb_0737 (192 aa).

This sequence belongs to the UPF0301 (AlgH) family.

In Burkholderia ambifaria (strain ATCC BAA-244 / DSM 16087 / CCUG 44356 / LMG 19182 / AMMD) (Burkholderia cepacia (strain AMMD)), this protein is UPF0301 protein Bamb_0737.